An 81-amino-acid chain; its full sequence is Dermaseptin-B7 (81 aa).

The first 22 residues, 1–22 (MASLKKSLFLVLFLGLVSLSIC), serve as a signal peptide directing secretion. A propeptide spanning residues 23-44 (EEEKRENEDEEEQEDDEQSEMK) is cleaved from the precursor. Residues 24-48 (EEKRENEDEEEQEDDEQSEMKRGLW) are disordered. Residues 30–40 (EDEEEQEDDEQ) show a composition bias toward acidic residues. The residue at position 78 (Val78) is a Valine amide. Residues 80 to 81 (EQ) constitute a propeptide that is removed on maturation.

It belongs to the frog skin active peptide (FSAP) family. Dermaseptin subfamily. Expressed by the skin glands.

It is found in the secreted. Functionally, has antimicrobial activity. This Phyllomedusa bicolor (Two-colored leaf frog) protein is Dermaseptin-B7 (DRG1).